Here is a 97-residue protein sequence, read N- to C-terminus: Large ribosomal subunit protein bL28 (97 aa).

It belongs to the bacterial ribosomal protein bL28 family.

The protein is Large ribosomal subunit protein bL28 of Rhizorhabdus wittichii (strain DSM 6014 / CCUG 31198 / JCM 15750 / NBRC 105917 / EY 4224 / RW1) (Sphingomonas wittichii).